Here is a 265-residue protein sequence, read N- to C-terminus: Small ribosomal subunit protein eS1 (265 aa).

Disordered regions lie at residues 1–24 (MTQG…RTID) and 240–265 (HEKK…LLAQ). The segment covering 240 to 253 (HEKKGEKATGRDGA) has biased composition (basic and acidic residues).

The protein belongs to the eukaryotic ribosomal protein eS1 family. As to quaternary structure, component of the small ribosomal subunit. Mature ribosomes consist of a small (40S) and a large (60S) subunit. The 40S subunit contains about 33 different proteins and 1 molecule of RNA (18S). The 60S subunit contains about 49 different proteins and 3 molecules of RNA (25S, 5.8S and 5S).

The protein resides in the cytoplasm. This chain is Small ribosomal subunit protein eS1, found in Tetrahymena thermophila (strain SB210).